Reading from the N-terminus, the 386-residue chain is Adiponectin receptor protein 2 (386 aa).

The segment at 1-71 (MNEPTENRLG…HEYSDEAPQE (71 aa)) is disordered. The Cytoplasmic segment spans residues 1-147 (MNEPTENRLG…SIFRIHTETG (147 aa)). The span at 15-41 (PEPDIRLRKGHQLDGTRRGDNDSHQGD) shows a compositional bias: basic and acidic residues. A helical membrane pass occupies residues 148-168 (NIWTHLLGCVFFLCLGIFYMF). The Extracellular segment spans residues 169–181 (RPNISFVAPLQEK). The helical transmembrane segment at 182 to 202 (VVFGLFFLGAILCLSFSWLFH) threads the bilayer. His-202 contributes to the Zn(2+) binding site. Over 203-213 (TVYCHSEGVSR) the chain is Cytoplasmic. Residues 214-234 (LFSKLDYSGIALLIMGSFVPW) traverse the membrane as a helical segment. At 235–245 (LYYSFYCNPQP) the chain is on the extracellular side. A helical membrane pass occupies residues 246-266 (CFIYLIVICVLGIAAIIVSQW). The Cytoplasmic segment spans residues 267 to 273 (DMFATPQ). Residues 274-294 (YRGVRAGVFLGLGLSGIIPTL) form a helical membrane-spanning segment. Over 295 to 309 (HYVISEGFLKAATIG) the chain is Extracellular. The helical transmembrane segment at 310 to 330 (QIGWLMLMASLYITGAALYAA) threads the bilayer. Residues 331 to 348 (RIPERFFPGKCDIWFHSH) are Cytoplasmic-facing. Residues His-348 and His-352 each contribute to the Zn(2+) site. Residues 349–369 (QLFHIFVVAGAFVHFHGVSNL) traverse the membrane as a helical segment. Over 370-386 (QEFRFMIGGGCSEEDAL) the chain is Extracellular.

The protein belongs to the ADIPOR family. As to quaternary structure, may form homooligomers and heterooligomers with ADIPOR1. Interacts with APPL2 (via BAR domain); ADIPOQ dissociates this interaction. As to expression, ubiquitous. Highly expressed in skeletal muscle, liver and placenta. Weakly expressed in brain, heart, colon, spleen, kidney, thymus, small intestine, peripheral blood leukocytes and lung.

Its subcellular location is the cell membrane. In terms of biological role, receptor for ADIPOQ, an essential hormone secreted by adipocytes that regulates glucose and lipid metabolism. Required for normal body fat and glucose homeostasis. ADIPOQ-binding activates a signaling cascade that leads to increased PPARA activity, and ultimately to increased fatty acid oxidation and glucose uptake. Has intermediate affinity for globular and full-length adiponectin. Required for normal revascularization after chronic ischemia caused by severing of blood vessels. The protein is Adiponectin receptor protein 2 of Homo sapiens (Human).